A 625-amino-acid chain; its full sequence is MPSSKARDSPSVERRDRLTLAKLASYDDVATDALVDRAYFWTNTRKNRTKYIPVRGVHEDDVARILLHEVIVAKDSAQAEKQLLAMSGMKKYLAKLPNDREKEWFRRHLRKYIQMYLPDSPFEVTTTNRYTITEHEAAICARKFIKQGQEIKYLSGTLVPMTREEEQELDLKRKDFSIVMSSRRKTPSFFLGPARFANHDCNANGRLVTRGSEGMQVVATRDIYIGEEITVSYGDDYFGIDNCECLCLTCERAVRNGWAPHVDSEEGSSKASTPALNDEAISNDSLLSPRKRKHHLDSDSDISPSSTPRKRSKFTRQSSKLRSAVSLADFAPVGSGSDNPPPQAETSIVPETTGAASITNDTIVPASGSAVEVSQASATDCDSSPSLEADESHHSSTSTTPTSIGDVKIKVEDTVEASLTESASATHITLSITGQPHNDRHPPGTDNDMLSELSEITDNPQKPKRSRGSRWKHGVVPSVEEESHRVRVPGDYTKTSKLLAQAYDRWVDCHTCNVWFVQHNSYLTRRECPRCERHSMLYGFRWPKTDKEGSMDDEERVMDHRTVHRFLYPEEEARISRKDRGVSFGVTPTPELSEPRTETEDSEACDDRRNTRASRTRTRSLRMTM.

The region spanning 120–234 is the SET domain; the sequence is SPFEVTTTNR…IGEEITVSYG (115 aa). 5 disordered regions span residues 260 to 348, 368 to 405, 432 to 451, 457 to 476, and 582 to 625; these read PHVD…ETSI, GSAV…TSIG, ITGQ…DMLS, TDNP…HGVV, and VSFG…RMTM. 2 stretches are compositionally biased toward polar residues: residues 269–286 and 372–386; these read SKAS…NDSL and EVSQ…SSPS. Residues 462–473 show a composition bias toward basic residues; that stretch reads KPKRSRGSRWKH. Basic and acidic residues predominate over residues 593–610; that stretch reads SEPRTETEDSEACDDRRN. Over residues 611–625 the composition is skewed to basic residues; the sequence is TRASRTRTRSLRMTM.

This sequence belongs to the class V-like SAM-binding methyltransferase superfamily. Histone-lysine methyltransferase family. Suvar4-20 subfamily.

Its subcellular location is the nucleus. It localises to the chromosome. The enzyme catalyses L-lysyl(20)-[histone H4] + 3 S-adenosyl-L-methionine = N(6),N(6),N(6)-trimethyl-L-lysyl(20)-[histone H4] + 3 S-adenosyl-L-homocysteine + 3 H(+). In terms of biological role, histone methyltransferase that trimethylates 'Lys-20' of histone H4 to form H4K20me3. This is Histone-lysine N-methyltransferase set9 (set9) from Aspergillus oryzae (strain ATCC 42149 / RIB 40) (Yellow koji mold).